The chain runs to 508 residues: Light-independent protochlorophyllide reductase subunit B (508 aa).

Asp-36 contacts [4Fe-4S] cluster. Catalysis depends on Asp-294, which acts as the Proton donor. Residue 429 to 430 coordinates substrate; sequence GM.

It belongs to the ChlB/BchB/BchZ family. In terms of assembly, protochlorophyllide reductase is composed of three subunits; ChlL, ChlN and ChlB. Forms a heterotetramer of two ChlB and two ChlN subunits. [4Fe-4S] cluster is required as a cofactor.

The protein localises to the plastid. The protein resides in the chloroplast. It catalyses the reaction chlorophyllide a + oxidized 2[4Fe-4S]-[ferredoxin] + 2 ADP + 2 phosphate = protochlorophyllide a + reduced 2[4Fe-4S]-[ferredoxin] + 2 ATP + 2 H2O. The protein operates within porphyrin-containing compound metabolism; chlorophyll biosynthesis (light-independent). Component of the dark-operative protochlorophyllide reductase (DPOR) that uses Mg-ATP and reduced ferredoxin to reduce ring D of protochlorophyllide (Pchlide) to form chlorophyllide a (Chlide). This reaction is light-independent. The NB-protein (ChlN-ChlB) is the catalytic component of the complex. In Pyropia yezoensis (Susabi-nori), this protein is Light-independent protochlorophyllide reductase subunit B.